The sequence spans 308 residues: Aspartate carbamoyltransferase catalytic subunit (308 aa).

Carbamoyl phosphate is bound by residues Arg-49 and Thr-50. Residue Lys-77 coordinates L-aspartate. Arg-99, His-127, and Gln-130 together coordinate carbamoyl phosphate. L-aspartate contacts are provided by Arg-160 and Arg-211. Carbamoyl phosphate is bound by residues Ala-252 and Pro-253.

The protein belongs to the aspartate/ornithine carbamoyltransferase superfamily. ATCase family. Heterododecamer (2C3:3R2) of six catalytic PyrB chains organized as two trimers (C3), and six regulatory PyrI chains organized as three dimers (R2).

It carries out the reaction carbamoyl phosphate + L-aspartate = N-carbamoyl-L-aspartate + phosphate + H(+). The protein operates within pyrimidine metabolism; UMP biosynthesis via de novo pathway; (S)-dihydroorotate from bicarbonate: step 2/3. Functionally, catalyzes the condensation of carbamoyl phosphate and aspartate to form carbamoyl aspartate and inorganic phosphate, the committed step in the de novo pyrimidine nucleotide biosynthesis pathway. This is Aspartate carbamoyltransferase catalytic subunit from Bacillus caldolyticus.